A 209-amino-acid chain; its full sequence is Large ribosomal subunit protein uL3 (209 aa).

Over residues 112 to 122 the composition is skewed to polar residues; the sequence is GTTRGHGTQGN. Residues 112–146 form a disordered region; it reads GTTRGHGTQGNIKRWGQSRGPETHGSRYHRIPGSM.

This sequence belongs to the universal ribosomal protein uL3 family. As to quaternary structure, part of the 50S ribosomal subunit. Forms a cluster with proteins L14 and L19.

Its function is as follows. One of the primary rRNA binding proteins, it binds directly near the 3'-end of the 23S rRNA, where it nucleates assembly of the 50S subunit. This Lactobacillus johnsonii (strain CNCM I-12250 / La1 / NCC 533) protein is Large ribosomal subunit protein uL3.